The chain runs to 590 residues: UvrABC system protein C (590 aa).

In terms of domain architecture, GIY-YIG spans Glu-14–Val-91. One can recognise a UVR domain in the interval Glu-196 to Thr-231.

The protein belongs to the UvrC family. Interacts with UvrB in an incision complex.

The protein localises to the cytoplasm. Its function is as follows. The UvrABC repair system catalyzes the recognition and processing of DNA lesions. UvrC both incises the 5' and 3' sides of the lesion. The N-terminal half is responsible for the 3' incision and the C-terminal half is responsible for the 5' incision. The polypeptide is UvrABC system protein C (Geobacillus kaustophilus (strain HTA426)).